Reading from the N-terminus, the 260-residue chain is MGKKKMKLSSLFKGGAGGLLAVPLCYNAKTLSFRVGDDMIKTVNSVFFDHHHNNNNGGDLLEAETPESWFTNSSETASHSTESDQDLDAESLEMVVRGVVRSERLFFDPGVTSSILEEIEEKSKSDLKSKETVAVGEDRSTPIEEISVAVAMESEDPYGDFRRSMEEMVTSHGELAKDWESLESMLAWYLRMNGRKSHGVIVSAFVDLLSGLSDSGAGITSASVSDSARYSTAVSSLPSSPVYSLSQGQTEIQEEERRSC.

Positions 150-211 constitute an OVATE domain; it reads VAMESEDPYG…VSAFVDLLSG (62 aa).

In terms of tissue distribution, expressed in roots, rosette and cauline leaves, shoots, stems, flower buds and siliques.

It localises to the nucleus. In terms of biological role, transcriptional repressor that regulates multiple aspects of plant growth and development through the regulation of BEL1-LIKE (BLH) and KNOX TALE (KNAT) homeodomain transcription factors. This chain is Transcription repressor OFP13 (OFP13), found in Arabidopsis thaliana (Mouse-ear cress).